A 46-amino-acid polypeptide reads, in one-letter code: Defensin Tk-AMP-D6.1 (46 aa).

Disulfide bonds link cysteine 3–cysteine 46, cysteine 14–cysteine 34, cysteine 20–cysteine 40, and cysteine 24–cysteine 42.

Functionally, plant defense peptide. This is Defensin Tk-AMP-D6.1 from Triticum kiharae (Wheat).